The primary structure comprises 199 residues: Cilia- and flagella-associated protein 20 (199 aa).

This sequence belongs to the CFAP20 family. In terms of tissue distribution, expressed in spermatocytes and chordotonal organs in sensory neurons of the antenna.

The protein resides in the nucleus. It is found in the nucleolus. The protein localises to the cell projection. Its subcellular location is the cilium. It localises to the cytoplasm. The protein resides in the cytoskeleton. It is found in the microtubule organizing center. The protein localises to the centrosome. Its subcellular location is the centriole. It localises to the flagellum. The protein resides in the cilium axoneme. In terms of biological role, cilium- and flagellum-specific protein that plays a role in axonemal structure organization and motility. Microtubule inner protein (MIP) part of the dynein-decorated doublet microtubules (DMTs) in cilia axoneme, which is required for motile cilia beating. Involved in the regulation of the size and morphology of cilia. Required for sperm individualization, differentiation of the sperm flagellum and tubulin polyglycylation of axonemal microtubules. The protein is Cilia- and flagella-associated protein 20 of Drosophila melanogaster (Fruit fly).